The following is a 489-amino-acid chain: RNA polymerase II subunit 5-mediating protein homolog (489 aa).

Disordered regions lie at residues 141 to 188 (NSDE…MDEE), 200 to 329 (EEKE…EEDE), 396 to 415 (ILKT…SYNE), and 434 to 489 (FENQ…RQNK). Residues 157 to 168 (QKSTTTTTTTTT) show a composition bias toward low complexity. 2 stretches are compositionally biased toward basic and acidic residues: residues 169–188 (SKDK…MDEE) and 215–224 (FNKKFNKKLD). 3 stretches are compositionally biased toward acidic residues: residues 227 to 265 (GSDE…EDEK), 276 to 298 (EEDD…EYYD), and 315 to 329 (QGDD…EEDE). A compositionally biased stretch (polar residues) spans 396 to 413 (ILKTNSSGNLMSTIPKSY). A compositionally biased stretch (basic residues) spans 480-489 (SRFKSSRQNK).

This sequence belongs to the RNA polymerase II subunit 5-mediating protein family.

It localises to the nucleus. The polypeptide is RNA polymerase II subunit 5-mediating protein homolog (rmp) (Dictyostelium discoideum (Social amoeba)).